The following is a 316-amino-acid chain: Large ribosomal subunit protein uL10 (316 aa).

Residues 289-316 (AAAAAPAKEAPKEESEESDEDMGFGLFD) are disordered.

It belongs to the universal ribosomal protein uL10 family. P0 forms a pentameric complex by interaction with dimers of P1 and P2. Post-translationally, phosphorylated.

Its subcellular location is the nucleus. The protein localises to the cytoplasm. In terms of biological role, ribosomal protein P0 is the functional equivalent of E.coli protein L10. The chain is Large ribosomal subunit protein uL10 (RPLP0) from Gallus gallus (Chicken).